The sequence spans 250 residues: Ribosomal RNA small subunit methyltransferase J (250 aa).

Residues 96–97 (RD) and D168 contribute to the S-adenosyl-L-methionine site.

The protein belongs to the methyltransferase superfamily. RsmJ family.

The protein localises to the cytoplasm. The enzyme catalyses guanosine(1516) in 16S rRNA + S-adenosyl-L-methionine = N(2)-methylguanosine(1516) in 16S rRNA + S-adenosyl-L-homocysteine + H(+). Its function is as follows. Specifically methylates the guanosine in position 1516 of 16S rRNA. This chain is Ribosomal RNA small subunit methyltransferase J, found in Neisseria meningitidis serogroup C / serotype 2a (strain ATCC 700532 / DSM 15464 / FAM18).